Here is a 423-residue protein sequence, read N- to C-terminus: Serine--tRNA ligase (423 aa).

229–231 (TAE) lines the L-serine pocket. 260-262 (RKE) is a binding site for ATP. E283 contributes to the L-serine binding site. ATP is bound at residue 347–350 (EISS). S383 lines the L-serine pocket.

Belongs to the class-II aminoacyl-tRNA synthetase family. Type-1 seryl-tRNA synthetase subfamily. Homodimer. The tRNA molecule binds across the dimer.

It is found in the cytoplasm. It catalyses the reaction tRNA(Ser) + L-serine + ATP = L-seryl-tRNA(Ser) + AMP + diphosphate + H(+). The enzyme catalyses tRNA(Sec) + L-serine + ATP = L-seryl-tRNA(Sec) + AMP + diphosphate + H(+). Its pathway is aminoacyl-tRNA biosynthesis; selenocysteinyl-tRNA(Sec) biosynthesis; L-seryl-tRNA(Sec) from L-serine and tRNA(Sec): step 1/1. Its function is as follows. Catalyzes the attachment of serine to tRNA(Ser). Is also able to aminoacylate tRNA(Sec) with serine, to form the misacylated tRNA L-seryl-tRNA(Sec), which will be further converted into selenocysteinyl-tRNA(Sec). The sequence is that of Serine--tRNA ligase from Syntrophotalea carbinolica (strain DSM 2380 / NBRC 103641 / GraBd1) (Pelobacter carbinolicus).